Reading from the N-terminus, the 550-residue chain is Carboxypeptidase Y homolog A (550 aa).

Residues 1 to 18 form the signal peptide; the sequence is MKSLVLGLLVGSAIASGP. Positions 19–131 are excised as a propeptide; the sequence is LQHVLHAPPD…KLAQYDLRIK (113 aa). Positions 20–39 are disordered; the sequence is QHVLHAPPDPEPKPEPEPQV. Disulfide bonds link Cys185–Cys424, Cys319–Cys333, Cys343–Cys366, Cys350–Cys359, and Cys388–Cys394. N-linked (GlcNAc...) asparagine glycosylation is found at Asn203 and Asn216. Residue Ser272 is part of the active site. Asn289 is a glycosylation site (N-linked (GlcNAc...) asparagine). Asn387 carries N-linked (GlcNAc...) asparagine glycosylation. Asp463 is a catalytic residue. N-linked (GlcNAc...) asparagine glycosylation is found at Asn493 and Asn514. Residue His525 is part of the active site.

The protein belongs to the peptidase S10 family.

It is found in the vacuole. It catalyses the reaction Release of a C-terminal amino acid with broad specificity.. In terms of biological role, vacuolar carboxypeptidase involved in degradation of small peptides. Digests preferentially peptides containing an aliphatic or hydrophobic residue in P1' position, as well as methionine, leucine or phenylalanine in P1 position of ester substrate. This is Carboxypeptidase Y homolog A (CPYA) from Paracoccidioides brasiliensis (strain Pb03).